The following is a 1285-amino-acid chain: Protein crumbs homolog 2 (1285 aa).

A signal peptide spans 1-28 (MALARPGTPDPQALASVLLLLLWAPALS). The interval 1–350 (MALARPGTPD…GFQCHCPDGY (350 aa)) is required for maximum inhibition of APP amyloid-beta peptide secretion. Residues 67–106 (EPRGCATQPCHHGALCVPQGPDPTGFRCYCVPGFQGPRCE) enclose the EGF-like 1 domain. 27 cysteine pairs are disulfide-bonded: cysteine 71–cysteine 82, cysteine 76–cysteine 94, cysteine 96–cysteine 105, cysteine 112–cysteine 123, cysteine 117–cysteine 132, cysteine 134–cysteine 143, cysteine 150–cysteine 161, cysteine 155–cysteine 170, cysteine 172–cysteine 181, cysteine 188–cysteine 199, cysteine 193–cysteine 208, cysteine 210–cysteine 220, cysteine 227–cysteine 238, cysteine 232–cysteine 247, cysteine 249–cysteine 258, cysteine 265–cysteine 276, cysteine 270–cysteine 306, cysteine 308–cysteine 317, cysteine 324–cysteine 335, cysteine 329–cysteine 344, cysteine 346–cysteine 355, cysteine 362–cysteine 373, cysteine 367–cysteine 382, cysteine 384–cysteine 393, cysteine 400–cysteine 411, cysteine 405–cysteine 424, and cysteine 426–cysteine 435. Residues 108 to 144 (DIDECASRPCHHGATCRNLADRYECHCPLGYAGVTCE) enclose the EGF-like 2; calcium-binding domain. Positions 146–182 (EVDECASAPCLHGGSCLDGVGSFRCVCAPGYGGTRCQ) constitute an EGF-like 3; calcium-binding domain. Positions 184-221 (DLDECQSQPCAHGGTCHDLVNGFRCDCAGTGYEGTHCE) constitute an EGF-like 4; calcium-binding domain. EGF-like domains are found at residues 223-259 (EVLE…ELCE) and 261-318 (DEDE…ADCG). The N-linked (GlcNAc...) asparagine glycan is linked to asparagine 235. A glycan (O-linked (Glc...) serine) is linked at serine 267. The EGF-like 7; calcium-binding domain maps to 320–356 (EVDECASRPCLNGGHCQDLPNGFQCHCPDGYAGPTCE). Residues 358–394 (DVDECLSDPCLHGGTCSDTVAGYICRCPETWGGRDCS) enclose the EGF-like 8; calcium-binding domain. The EGF-like 9 domain maps to 396–436 (QLTGCQGHTCPLAATCIPIFESGVHSYVCHCPPGTHGPFCG). The Laminin G-like 1 domain occupies 431–603 (HGPFCGQNTT…DLGENVLLGC (173 aa)). N-linked (GlcNAc...) asparagine glycosylation is found at asparagine 438 and asparagine 478. Cystine bridges form between cysteine 579–cysteine 603, cysteine 609–cysteine 620, cysteine 614–cysteine 629, and cysteine 631–cysteine 640. The region spanning 605-641 (RREQCRPLPCVHGGSCVDLWTHFRCDCARPHRGPTCA) is the EGF-like 10 domain. The Laminin G-like 2 domain maps to 647-805 (ATFGLGGAPS…RQSWNLTAGC (159 aa)). Asparagine 669, asparagine 690, asparagine 786, and asparagine 800 each carry an N-linked (GlcNAc...) asparagine glycan. Disulfide bonds link cysteine 766–cysteine 805, cysteine 811–cysteine 822, cysteine 816–cysteine 831, and cysteine 833–cysteine 842. The 37-residue stretch at 807 to 843 (SEDMCSPDPCFNGGTCLVTWNDFHCTCPANFTGPTCA) folds into the EGF-like 11 domain. N-linked (GlcNAc...) asparagine glycans are attached at residues asparagine 836, asparagine 886, asparagine 926, and asparagine 1009. A Laminin G-like 3 domain is found at 871–1054 (EATFREGPPA…PGTPAPILGC (184 aa)). 13 cysteine pairs are disulfide-bonded: cysteine 1013/cysteine 1054, cysteine 1060/cysteine 1071, cysteine 1065/cysteine 1080, cysteine 1082/cysteine 1091, cysteine 1098/cysteine 1108, cysteine 1103/cysteine 1118, cysteine 1120/cysteine 1129, cysteine 1138/cysteine 1150, cysteine 1144/cysteine 1159, cysteine 1161/cysteine 1170, cysteine 1177/cysteine 1188, cysteine 1182/cysteine 1197, and cysteine 1199/cysteine 1208. EGF-like domains follow at residues 1056–1092 (GAPV…PRCE), 1094–1130 (HVDP…PRCR), 1134–1171 (PSKE…QRCQ), and 1173–1209 (PTLP…QFCE). Residues asparagine 1141 and asparagine 1158 are each glycosylated (N-linked (GlcNAc...) asparagine). Residues 1225–1245 (VAVPAACACLLLLLLGLLSGI) traverse the membrane as a helical segment. Residues 1249-1285 (RKRRQSEGTYSPSQQEVAGARLEMDSVLKVPPEERLI) form an interaction with EPB41L5 region.

This sequence belongs to the Crumbs protein family. As to quaternary structure, associates with the gamma-secretase complex via interaction (via the transmembrane domain) with PSEN1/PS1. Interacts (via intracellular domain) with EPB41L5. Interacts with PALS1. O-glucosylated by POGLUT1 at Ser-267; consists of an O-glucose trisaccharide, in which the O-glucose is elongated by the addition of two xylose residues. O-glucosylation is required for localization at the plasma membrane. Post-translationally, N-glycosylated. In terms of tissue distribution, expressed in glomeruli, podocytes of the glomerular capillary loops, and parietal glomerular epithelial cells in the kidney (at protein level). Expressed in retina, fetal eye and brain. Also expressed in kidney, RPE/choroid, and at low levels in lung, placenta, and heart.

It is found in the apical cell membrane. Its subcellular location is the cytoplasm. The protein resides in the cell junction. The protein localises to the secreted. Its function is as follows. Apical polarity protein that plays a central role during the epithelial-to-mesenchymal transition (EMT) at gastrulation, when newly specified mesodermal cells move inside the embryo. Acts by promoting cell ingression, the process by which cells leave the epithelial epiblast and move inside the embryo to form a new tissue layer. The anisotropic distribution of CRB2 and MYH10/myosin-IIB at cell edges define which cells will ingress: cells with high apical CRB2 are probably extruded from the epiblast by neighboring cells with high levels of apical MYH10/myosin-IIB. Plays a role in the maintenance of retinal neuroepithelium organization, structural integrity, adhesion, photoreceptor polarity and retinal photoreceptor layer thickness. May play a role in determining the length of cone photoreceptor outer segments and proliferation of late-born progenitor cells. Also required for maintenance of the apical polarity complex during development of the cortex. Inhibits gamma-secretase-dependent cleavage of APP and secretion of amyloid-beta peptide 40 and amyloid-beta peptide 42, and thereby inhibits gamma-secretase-dependent Notch transcription. This Homo sapiens (Human) protein is Protein crumbs homolog 2.